Here is a 50-residue protein sequence, read N- to C-terminus: uncharacterized protein (50 aa).

A helical transmembrane segment spans residues 5–19; sequence IIIIVIVIIIFFFYL. A coiled-coil region spans residues 19-50; sequence LKQKKLTNCETQVVKVQKDIDEINLKLKKLNK.

The protein localises to the membrane. This is an uncharacterized protein from Acheta domesticus (House cricket).